Reading from the N-terminus, the 258-residue chain is UPF0246 protein YaaA (258 aa).

Belongs to the UPF0246 family.

This Escherichia coli O157:H7 protein is UPF0246 protein YaaA.